The sequence spans 70 residues: Adenylate kinase (70 aa).

Residue 10-15 (GAGKGT) coordinates ATP. The NMP stretch occupies residues 30–59 (STGDLFRANISKQTELGKLAKSYMDKGELV). AMP is bound by residues T31, R36, and 57–59 (ELV).

This sequence belongs to the adenylate kinase family. As to quaternary structure, monomer.

The protein localises to the cytoplasm. The catalysed reaction is AMP + ATP = 2 ADP. The protein operates within purine metabolism; AMP biosynthesis via salvage pathway; AMP from ADP: step 1/1. Functionally, catalyzes the reversible transfer of the terminal phosphate group between ATP and AMP. Plays an important role in cellular energy homeostasis and in adenine nucleotide metabolism. The sequence is that of Adenylate kinase (adk) from Streptomyces scabiei.